A 224-amino-acid polypeptide reads, in one-letter code: Ribonuclease 3 (224 aa).

One can recognise an RNase III domain in the interval 4-126 (LDRLQHKIGY…IIGAMSLDSN (123 aa)). Mg(2+) is bound at residue Glu39. The active site involves Asp43. Residues Asp112 and Glu115 each contribute to the Mg(2+) site. The active site involves Glu115. Positions 153 to 223 (DPKTRLQEYL…AEQILKVLDI (71 aa)) constitute a DRBM domain.

The protein belongs to the ribonuclease III family. Homodimer. It depends on Mg(2+) as a cofactor.

Its subcellular location is the cytoplasm. It catalyses the reaction Endonucleolytic cleavage to 5'-phosphomonoester.. Functionally, digests double-stranded RNA. Involved in the processing of primary rRNA transcript to yield the immediate precursors to the large and small rRNAs (23S and 16S). Processes some mRNAs, and tRNAs when they are encoded in the rRNA operon. Processes pre-crRNA and tracrRNA of type II CRISPR loci if present in the organism. In Actinobacillus succinogenes (strain ATCC 55618 / DSM 22257 / CCUG 43843 / 130Z), this protein is Ribonuclease 3.